Here is a 308-residue protein sequence, read N- to C-terminus: MMRVVVLGAAAGGGVPQWNCGCSVCRAAFADRDLRRTQASMAVSADGDHWFLINASPDLRQQVIATPQLHPKPGALRHSPIAGVILTNGEVDAVAGLLSMREGSPFAIYAHAKVLAILKANSIFNVLNEKLVSRRPIETDQRFEPTLPDGTLSGLDVVAFSVPGKGAWYLEGQAHPGGDAADGDTLGLTITDKATGQSIHVLTACARVTDDLKARLAGAPLVLFDGTVWRDDELITAGLGHKTGQAMGHIAMSGDEGAIAALGDLDIARKLFVHINNSNPVLLSCSAEREAAERAGWQVPADGTEVTL.

This sequence belongs to the PqqB family.

It functions in the pathway cofactor biosynthesis; pyrroloquinoline quinone biosynthesis. May be involved in the transport of PQQ or its precursor to the periplasm. The polypeptide is Coenzyme PQQ synthesis protein B (Rhodopseudomonas palustris (strain BisB5)).